We begin with the raw amino-acid sequence, 81 residues long: Photosystem I iron-sulfur center (81 aa).

2 4Fe-4S ferredoxin-type domains span residues 2–31 and 39–68; these read SHTVKIYDTCIGCTQCVRACPTDVLEMVPW and IASAPRTEDCVGCKRCESACPTDFLSVRVY. [4Fe-4S] cluster contacts are provided by C11, C14, C17, C21, C48, C51, C54, and C58.

In terms of assembly, the eukaryotic PSI reaction center is composed of at least 11 subunits. [4Fe-4S] cluster serves as cofactor.

It is found in the plastid. The protein localises to the chloroplast thylakoid membrane. It carries out the reaction reduced [plastocyanin] + hnu + oxidized [2Fe-2S]-[ferredoxin] = oxidized [plastocyanin] + reduced [2Fe-2S]-[ferredoxin]. Its function is as follows. Apoprotein for the two 4Fe-4S centers FA and FB of photosystem I (PSI); essential for photochemical activity. FB is the terminal electron acceptor of PSI, donating electrons to ferredoxin. The C-terminus interacts with PsaA/B/D and helps assemble the protein into the PSI complex. Required for binding of PsaD and PsaE to PSI. PSI is a plastocyanin/cytochrome c6-ferredoxin oxidoreductase, converting photonic excitation into a charge separation, which transfers an electron from the donor P700 chlorophyll pair to the spectroscopically characterized acceptors A0, A1, FX, FA and FB in turn. This Chlorella vulgaris (Green alga) protein is Photosystem I iron-sulfur center.